The following is a 226-amino-acid chain: Xanthocillin biosynthesis cluster protein F (226 aa).

Its pathway is secondary metabolite biosynthesis. Part of the gene cluster that mediates the biosynthesis of the isocyanide xanthocillin and its derivatives. The first step of the pathway consists in the conversion of tyrosine into a vinyl-isonitrile intermediate by the isocyanide synthase xanB. Subsequent oxidative dimerization of this intermediate to form xanthocillin may involve the cytochrome P450 monooxygenase xanG, whose expression is coregulated with that of XanB. Xanthocillin can be further modified by the isonitrile hydratase-like protein xanA which introduces N-formyl groups and the methyltransferase xanE which introduces methyl groups, leading to the production of several derivatives including fumiformamide. Finally, fumiformamide can be subject to both oxidative and reductive cyclization to yield melanocins E and F, respectively. The chain is Xanthocillin biosynthesis cluster protein F from Aspergillus fumigatus (strain ATCC MYA-4609 / CBS 101355 / FGSC A1100 / Af293) (Neosartorya fumigata).